We begin with the raw amino-acid sequence, 444 residues long: Glutamyl-tRNA reductase (444 aa).

Residues Thr49–Arg52, Ser109, Glu114–Gln116, and Gln120 contribute to the substrate site. The Nucleophile role is filled by Cys50. Position 189 to 194 (Gly189 to Gly194) interacts with NADP(+).

This sequence belongs to the glutamyl-tRNA reductase family. As to quaternary structure, homodimer.

It carries out the reaction (S)-4-amino-5-oxopentanoate + tRNA(Glu) + NADP(+) = L-glutamyl-tRNA(Glu) + NADPH + H(+). It participates in porphyrin-containing compound metabolism; protoporphyrin-IX biosynthesis; 5-aminolevulinate from L-glutamyl-tRNA(Glu): step 1/2. Catalyzes the NADPH-dependent reduction of glutamyl-tRNA(Glu) to glutamate 1-semialdehyde (GSA). The chain is Glutamyl-tRNA reductase from Bacillus cereus (strain 03BB102).